Reading from the N-terminus, the 151-residue chain is MPLKIEDLKPTPGSRKPKKRLGRGIGSGLGKTAGKGHKGEKARGRGKIGRTFEGGQTNIIRRTPKFGFSNAPFKKVYSVVNVETLEKYFSENEEVTPDILLEKKLIKKLNDGVKILGKGEISKPLVVKANIFSQTAREKIEAVGGKIEVIE.

Positions 1–51 (MPLKIEDLKPTPGSRKPKKRLGRGIGSGLGKTAGKGHKGEKARGRGKIGRT) are disordered. The segment covering 23–33 (RGIGSGLGKTA) has biased composition (gly residues).

This sequence belongs to the universal ribosomal protein uL15 family. Part of the 50S ribosomal subunit.

Its function is as follows. Binds to the 23S rRNA. This Petrotoga mobilis (strain DSM 10674 / SJ95) protein is Large ribosomal subunit protein uL15.